A 283-amino-acid chain; its full sequence is Stage II sporulation protein Q (283 aa).

The chain crosses the membrane as a helical span at residues 22–42 (WVFPAIYLVSAAVILTAVLWY). Residues 228-283 (EKAATQETEESIQQSSEKKDGSTEKGTEEKSGEKKDDSTDKSGSKESSTTEDTEQS) form a disordered region. The segment covering 243–271 (SEKKDGSTEKGTEEKSGEKKDDSTDKSGS) has biased composition (basic and acidic residues).

In terms of assembly, interacts with SpoIIIAH and SpoIIE.

It is found in the forespore membrane. Its function is as follows. Involved in forespore engulfment and required for anchoring membrane proteins on the forespore side of the septal membrane. Forms a channel with SpoIIIAH that is open on the forespore end and closed (or gated) on the mother cell end. This allows sigma-E-directed gene expression in the mother-cell compartment of the sporangium to trigger the activation of sigma-G forespore-specific gene expression by a pathway of intercellular signaling. In Bacillus subtilis (strain 168), this protein is Stage II sporulation protein Q (spoIIQ).